Consider the following 859-residue polypeptide: DNA mismatch repair protein MutS (859 aa).

618–625 contributes to the ATP binding site; the sequence is GPNMGGKS.

This sequence belongs to the DNA mismatch repair MutS family.

Functionally, this protein is involved in the repair of mismatches in DNA. It is possible that it carries out the mismatch recognition step. This protein has a weak ATPase activity. In Shewanella sediminis (strain HAW-EB3), this protein is DNA mismatch repair protein MutS.